The sequence spans 575 residues: Regulatory protein zeste (575 aa).

The span at 1–26 (MSAQGEGGGAGGSGGGGAGSDGGGNA) shows a compositional bias: gly residues. Disordered stretches follow at residues 1–53 (MSAQ…LPLT) and 151–174 (SVAS…VKVE). Positions 2 to 47 (SAQGEGGGAGGSGGGGAGSDGGGNAGQSSTGSGTVAVTNGGNSSAK) are hydrophobic. Polar residues predominate over residues 31–51 (TGSGTVAVTNGGNSSAKNQLP). Residues 48-128 (NQLPLTPRFT…WLNSRLRKQY (81 aa)) mediate DNA binding. Low complexity predominate over residues 151–164 (SVASAVPQQQQQQH).

In terms of assembly, self-associates forming complexes of several hundred monomers.

It is found in the nucleus. Functionally, involved in transvection phenomena (= synapsis-dependent gene expression), where the synaptic pairing of chromosomes carrying genes with which zeste interacts influences the expression of these genes. Zeste binds to DNA and stimulates transcription from a nearby promoter. This Drosophila melanogaster (Fruit fly) protein is Regulatory protein zeste (z).